We begin with the raw amino-acid sequence, 823 residues long: DNA ligase (823 aa).

NAD(+)-binding positions include 32 to 36 (DAEYD), 81 to 82 (SL), and glutamate 121. The N6-AMP-lysine intermediate role is filled by lysine 123. The NAD(+) site is built by arginine 144, glutamate 181, lysine 299, and lysine 323. The Zn(2+) site is built by cysteine 449, cysteine 452, cysteine 467, and cysteine 473. The disordered stretch occupies residues 528-558 (ETADKGSSENENGDAETVSGDLSKYNTQNGK). The 78-residue stretch at 746-823 (GINKAVAGKT…SEAELLTLLC (78 aa)) folds into the BRCT domain.

The protein belongs to the NAD-dependent DNA ligase family. LigA subfamily. Mg(2+) serves as cofactor. Requires Mn(2+) as cofactor.

It catalyses the reaction NAD(+) + (deoxyribonucleotide)n-3'-hydroxyl + 5'-phospho-(deoxyribonucleotide)m = (deoxyribonucleotide)n+m + AMP + beta-nicotinamide D-nucleotide.. In terms of biological role, DNA ligase that catalyzes the formation of phosphodiester linkages between 5'-phosphoryl and 3'-hydroxyl groups in double-stranded DNA using NAD as a coenzyme and as the energy source for the reaction. It is essential for DNA replication and repair of damaged DNA. This Neisseria gonorrhoeae (strain NCCP11945) protein is DNA ligase.